A 451-amino-acid chain; its full sequence is Tubulin alpha-1A chain (451 aa).

An MREC motif motif is present at residues 1-4 (MREC). GTP is bound by residues Gln-11, Glu-71, Ser-140, Gly-144, Thr-145, Thr-179, Asn-206, and Asn-228. A Mg(2+)-binding site is contributed by Glu-71. Glu-254 is an active-site residue. The segment at 432 to 451 (YEEVGVDSVEGEGEEEGEEY) is disordered. Glu-445 bears the 5-glutamyl polyglutamate mark.

It belongs to the tubulin family. Dimer of alpha and beta chains. A typical microtubule is a hollow water-filled tube with an outer diameter of 25 nm and an inner diameter of 15 nM. Alpha-beta heterodimers associate head-to-tail to form protofilaments running lengthwise along the microtubule wall with the beta-tubulin subunit facing the microtubule plus end conferring a structural polarity. Microtubules usually have 13 protofilaments but different protofilament numbers can be found in some organisms and specialized cells. Mg(2+) serves as cofactor. Post-translationally, some glutamate residues at the C-terminus are polyglycylated, resulting in polyglycine chains on the gamma-carboxyl group. Glycylation is mainly limited to tubulin incorporated into axonemes (cilia and flagella) whereas glutamylation is prevalent in neuronal cells, centrioles, axonemes, and the mitotic spindle. Both modifications can coexist on the same protein on adjacent residues, and lowering polyglycylation levels increases polyglutamylation, and reciprocally. The precise function of polyglycylation is still unclear. In terms of processing, some glutamate residues at the C-terminus are polyglutamylated, resulting in polyglutamate chains on the gamma-carboxyl group. Polyglutamylation plays a key role in microtubule severing by spastin (SPAST). SPAST preferentially recognizes and acts on microtubules decorated with short polyglutamate tails: severing activity by SPAST increases as the number of glutamates per tubulin rises from one to eight, but decreases beyond this glutamylation threshold. Undergoes a tyrosination/detyrosination cycle, the cyclic removal and re-addition of a C-terminal tyrosine residue by the enzymes tubulin tyrosine carboxypeptidase (MATCAP1, VASH1 or VASH2) and tubulin tyrosine ligase (TTL), respectively. Post-translationally, tyrosination promotes microtubule interaction with CAP-Gly microtubule plus-end tracking proteins. Tyrosinated tubulins regulate the initiation of dynein-driven motility. In terms of processing, detyrosination is involved in metaphase plate congression by guiding chromosomes during mitosis. Detyrosination increases microtubules-dependent mechanotransduction in dystrophic cardiac and skeletal muscle. In cardiomyocytes, detyrosinated microtubules are required to resist to contractile compression during contraction.

It is found in the cytoplasm. The protein localises to the cytoskeleton. The enzyme catalyses GTP + H2O = GDP + phosphate + H(+). Tubulin is the major constituent of microtubules, a cylinder consisting of laterally associated linear protofilaments composed of alpha- and beta-tubulin heterodimers. Microtubules grow by the addition of GTP-tubulin dimers to the microtubule end, where a stabilizing cap forms. Below the cap, tubulin dimers are in GDP-bound state, owing to GTPase activity of alpha-tubulin. The protein is Tubulin alpha-1A chain (TUBA1A) of Gallus gallus (Chicken).